The sequence spans 452 residues: Flavanone 7-O-glucoside 2''-O-beta-L-rhamnosyltransferase (452 aa).

Catalysis depends on His-21, which acts as the Proton acceptor. Position 21 (His-21) interacts with an anthocyanidin. Asp-121 (charge relay) is an active-site residue. Residues Ile-136–Ile-156 traverse the membrane as a helical segment. UDP-beta-L-rhamnose-binding residues include Ser-268, Val-330, His-347, Gly-351, Ser-352, and Glu-355. A coiled-coil region spans residues Lys-407–Glu-436.

Belongs to the UDP-glycosyltransferase family. As to quaternary structure, monomer. Expressed in young fruits and leaves.

It localises to the membrane. The enzyme catalyses flavanone 7-O-beta-D-glucoside + UDP-beta-L-rhamnose = flavanone 7-O-[alpha-L-rhamnosyl-(1-&gt;2)-beta-D-glucoside] + UDP + H(+). Involved in the production of the bitter neohesperidosides in citrus. Shows a strict specificity for UDP-rhamnose as donor. The chain is Flavanone 7-O-glucoside 2''-O-beta-L-rhamnosyltransferase (C12RT1) from Citrus maxima (Pomelo).